Here is a 723-residue protein sequence, read N- to C-terminus: Multiple organellar RNA editing factor 4, mitochondrial (723 aa).

Residues methionine 1–tyrosine 64 constitute a mitochondrion transit peptide. 3 disordered regions span residues isoleucine 180–glutamine 303, arginine 318–proline 474, and glutamine 663–isoleucine 723. The segment covering glutamate 191 to glutamine 204 has biased composition (basic and acidic residues). 4 stretches are compositionally biased toward polar residues: residues threonine 219–aspartate 233, glycine 273–glutamine 303, glycine 327–glutamine 365, and glutamine 373–proline 430. Composition is skewed to low complexity over residues glutamine 459–proline 474 and glutamine 682–glutamine 695. The span at threonine 714 to isoleucine 723 shows a compositional bias: basic and acidic residues.

Belongs to the MORF family. Heterodimers with MORF8/RIP1, MORF1/RIP8 and MORF3/RIP3.

It localises to the mitochondrion. Functionally, involved in organellar RNA editing. Required for the processing of few RNA editing site in mitochondria. The sequence is that of Multiple organellar RNA editing factor 4, mitochondrial from Arabidopsis thaliana (Mouse-ear cress).